The sequence spans 120 residues: Large ribosomal subunit protein uL14 (120 aa).

Belongs to the universal ribosomal protein uL14 family. As to quaternary structure, part of the 50S ribosomal subunit. Forms a cluster with proteins L3 and L19. In the 70S ribosome, L14 and L19 interact and together make contacts with the 16S rRNA in bridges B5 and B8.

Binds to 23S rRNA. Forms part of two intersubunit bridges in the 70S ribosome. The polypeptide is Large ribosomal subunit protein uL14 (Dictyoglomus thermophilum (strain ATCC 35947 / DSM 3960 / H-6-12)).